The sequence spans 157 residues: 2-C-methyl-D-erythritol 2,4-cyclodiphosphate synthase (157 aa).

Residues D8 and H10 each contribute to the a divalent metal cation site. 4-CDP-2-C-methyl-D-erythritol 2-phosphate contacts are provided by residues 8–10 (DVH) and 34–35 (HS). H42 contacts a divalent metal cation. Residues 56-58 (DLG), 61-65 (FPDTD), 132-135 (TTTE), F139, and R142 contribute to the 4-CDP-2-C-methyl-D-erythritol 2-phosphate site.

This sequence belongs to the IspF family. As to quaternary structure, homotrimer. It depends on a divalent metal cation as a cofactor.

The enzyme catalyses 4-CDP-2-C-methyl-D-erythritol 2-phosphate = 2-C-methyl-D-erythritol 2,4-cyclic diphosphate + CMP. Its pathway is isoprenoid biosynthesis; isopentenyl diphosphate biosynthesis via DXP pathway; isopentenyl diphosphate from 1-deoxy-D-xylulose 5-phosphate: step 4/6. Its function is as follows. Involved in the biosynthesis of isopentenyl diphosphate (IPP) and dimethylallyl diphosphate (DMAPP), two major building blocks of isoprenoid compounds. Catalyzes the conversion of 4-diphosphocytidyl-2-C-methyl-D-erythritol 2-phosphate (CDP-ME2P) to 2-C-methyl-D-erythritol 2,4-cyclodiphosphate (ME-CPP) with a corresponding release of cytidine 5-monophosphate (CMP). This is 2-C-methyl-D-erythritol 2,4-cyclodiphosphate synthase from Salinibacter ruber (strain DSM 13855 / M31).